Reading from the N-terminus, the 344-residue chain is Glycerol-3-phosphate dehydrogenase [NAD(P)+] (344 aa).

Residues Ser23, Tyr24, His44, and Lys118 each contribute to the NADPH site. Residues Lys118, Gly147, and Thr149 each contribute to the sn-glycerol 3-phosphate site. Ala151 is a binding site for NADPH. Positions 203, 256, 266, 267, and 268 each coordinate sn-glycerol 3-phosphate. Lys203 acts as the Proton acceptor in catalysis. Arg267 provides a ligand contact to NADPH. NADPH is bound by residues Val291 and Glu293.

Belongs to the NAD-dependent glycerol-3-phosphate dehydrogenase family.

It is found in the cytoplasm. It carries out the reaction sn-glycerol 3-phosphate + NAD(+) = dihydroxyacetone phosphate + NADH + H(+). The catalysed reaction is sn-glycerol 3-phosphate + NADP(+) = dihydroxyacetone phosphate + NADPH + H(+). Its pathway is membrane lipid metabolism; glycerophospholipid metabolism. Functionally, catalyzes the reduction of the glycolytic intermediate dihydroxyacetone phosphate (DHAP) to sn-glycerol 3-phosphate (G3P), the key precursor for phospholipid synthesis. This chain is Glycerol-3-phosphate dehydrogenase [NAD(P)+], found in Vibrio cholerae serotype O1 (strain ATCC 39541 / Classical Ogawa 395 / O395).